The sequence spans 440 residues: Serine hydroxymethyltransferase (440 aa).

Residues L119 and 123 to 125 contribute to the (6S)-5,6,7,8-tetrahydrofolate site; that span reads GHL. The residue at position 228 (K228) is an N6-(pyridoxal phosphate)lysine. 370-372 is a (6S)-5,6,7,8-tetrahydrofolate binding site; that stretch reads SPF.

It belongs to the SHMT family. Homodimer. It depends on pyridoxal 5'-phosphate as a cofactor.

The protein localises to the cytoplasm. It catalyses the reaction (6R)-5,10-methylene-5,6,7,8-tetrahydrofolate + glycine + H2O = (6S)-5,6,7,8-tetrahydrofolate + L-serine. Its pathway is one-carbon metabolism; tetrahydrofolate interconversion. It participates in amino-acid biosynthesis; glycine biosynthesis; glycine from L-serine: step 1/1. Its function is as follows. Catalyzes the reversible interconversion of serine and glycine with tetrahydrofolate (THF) serving as the one-carbon carrier. This reaction serves as the major source of one-carbon groups required for the biosynthesis of purines, thymidylate, methionine, and other important biomolecules. Also exhibits THF-independent aldolase activity toward beta-hydroxyamino acids, producing glycine and aldehydes, via a retro-aldol mechanism. The protein is Serine hydroxymethyltransferase of Chlorobaculum tepidum (strain ATCC 49652 / DSM 12025 / NBRC 103806 / TLS) (Chlorobium tepidum).